A 133-amino-acid chain; its full sequence is Transcription antitermination protein NusB (133 aa).

This sequence belongs to the NusB family.

Involved in transcription antitermination. Required for transcription of ribosomal RNA (rRNA) genes. Binds specifically to the boxA antiterminator sequence of the ribosomal RNA (rrn) operons. The polypeptide is Transcription antitermination protein NusB (Clostridium botulinum (strain Alaska E43 / Type E3)).